The following is a 365-amino-acid chain: Aminotransferase poxL (365 aa).

Arg-92 contacts pyridoxal 5'-phosphate. Lys-193 carries the N6-(pyridoxal phosphate)lysine modification. Glu-229 contributes to the pyridoxal 5'-phosphate binding site.

Belongs to the class-IV pyridoxal-phosphate-dependent aminotransferase family. It depends on pyridoxal 5'-phosphate as a cofactor.

It participates in secondary metabolite biosynthesis. Its function is as follows. Aminotransferase; part of the gene cluster that mediates the biosynthesis of oxaleimides, cytotoxic compounds containing an unusual disubstituted succinimide moiety. The first step of the pathway is provided by the HR-PKS poxF that serves in a new mode of collaborative biosynthesis with the PKS-NRPS poxE, by providing the olefin containing amino acid substrate via the synthesis of an ACP-bound dec-4-enoate. The cytochrome P450 monooxygenase poxM-catalyzed oxidation at the alpha-position creates the enzyme-bound 2-hydroxydec-4-enoyl-ACP thioester, which may be prone to spontaneous hydrolysis to yield 2-hydroxydec-4-enoic acid due to increased electrophilicity of the carbonyl. 2-hydroxydec-4-enoic acid can then be further oxidized by poxM to yield the alpha-ketoacid 2-oxodec-4-enoicacid, which is reductively aminated by the aminotransferase poxL to yield (S,E)-2-aminodec-4-enoic acid. The Hybrid PKS-NRPS synthetase poxE then performs condensation between the octaketide product of its PKS modules and the amino group of (S,E)-2-aminodec-4-enoic acid which is activated and incorporated by the adenylation domain. The resulting aminoacyl product can be cyclized by the Diels-Alderase PoxQ and reductively released by the reductive (R) domain of poxE to yield an aldehyde intermediate. The released aldehyde is then substrate for a Knoevenagel condensation by the hydrolyase poxO followed by an oxidation at the 5-position of the pyrrolidone ring. The presence of the olefin from the amino acid building block allows for migration of the substituted allyl group to occur. This allylic transposition reaction takes place in a conjugate addition, semipinacol-like fashion to yield a succinimide intermediate. Iterative two-electron oxidations of the C7 methyl of the succinimide intermediate to the carboxylic acid can be catalyzed by one of two remaining cytochrome P450 monooxygenasess poxC or poxD to yield oxaleimide A. Subsequent oxidation yields the maleimide scaffold oxaleimide I. Both oxaleimide A and oxaleimide I can undergo oxidative modifications in the decalin ring to yield the series of products oxaleimides B to H. This Penicillium oxalicum protein is Aminotransferase poxL.